The following is a 230-amino-acid chain: LexA repressor (230 aa).

The H-T-H motif DNA-binding region spans 28–48 (IREIGEALDIRSTNGVNDHLK). Catalysis depends on for autocatalytic cleavage activity residues S148 and K185.

It belongs to the peptidase S24 family. Homodimer.

The enzyme catalyses Hydrolysis of Ala-|-Gly bond in repressor LexA.. Its function is as follows. Represses a number of genes involved in the response to DNA damage (SOS response), including recA and lexA. In the presence of single-stranded DNA, RecA interacts with LexA causing an autocatalytic cleavage which disrupts the DNA-binding part of LexA, leading to derepression of the SOS regulon and eventually DNA repair. The chain is LexA repressor from Anaeromyxobacter sp. (strain K).